A 441-amino-acid polypeptide reads, in one-letter code: Tubulin beta-1 chain (441 aa).

Residues Gln-11, Glu-69, Ser-138, Gly-142, Thr-143, Gly-144, Asn-204, and Asn-226 each contribute to the GTP site. Glu-69 serves as a coordination point for Mg(2+).

The protein belongs to the tubulin family. Dimer of alpha and beta chains. A typical microtubule is a hollow water-filled tube with an outer diameter of 25 nm and an inner diameter of 15 nM. Alpha-beta heterodimers associate head-to-tail to form protofilaments running lengthwise along the microtubule wall with the beta-tubulin subunit facing the microtubule plus end conferring a structural polarity. Microtubules usually have 13 protofilaments but different protofilament numbers can be found in some organisms and specialized cells. Requires Mg(2+) as cofactor. Expressed primarily in touch receptor neurons.

The protein resides in the cytoplasm. It is found in the cytoskeleton. TTubulin is the major constituent of microtubules, a cylinder consisting of laterally associated linear protofilaments composed of alpha- and beta-tubulin heterodimers. Microtubules grow by the addition of GTP-tubulin dimers to the microtubule end, where a stabilizing cap forms. Below the cap, tubulin dimers are in GDP-bound state, owing to GTPase activity of alpha-tubulin. Plays a role in mechanosensory transduction (touch sensitivity). Functionally, mec-7 beta-tubulin is required for the production of 15-protofilament microtubules. The chain is Tubulin beta-1 chain (mec-7) from Caenorhabditis elegans.